A 757-amino-acid polypeptide reads, in one-letter code: MGSSSSTQHHFAFQNAEKAFKAAALIQRWYRRYMARLEMRRRCTWNIFQSIEYAGQQDQVKLHEFFSYLVDHFTPSSHHERDFLNRMFTEERFAQDVETEEGGDFESIEVPDSYTGPRLSFPLLPDHATALVEAFRLRQQLHARYVLNLLYETRKHLAQLPNINRVSTCYSEEVTVCGDLHGQLDDLIFIFYKNGLPSPERAYVFNGDFVDRGKDSVEVLMVLFAFMLVYPKEFHLNRGNHEDHLVNLRYGFTKEVMHKYKIHGKKILRTLQDVFCWLPLATLVDEKVLVLHGGVSDKTDLELLAKLDRHKIVSTMRCKTRKESENREEQKRKDNQTSSGQKPTPWFLPQSRSLPSSPFHLGSGFKAYKAGRSCSIPCGSPNSKELSRRGQVRRSVDLELEQCRQQAGFLGIREKGESLPLAPDADCVADGGGVLEPTPEEWKQVVDILWSDPAAQEGCKANAVRGGGCYFGPDVTERLMEKYKLQLLIRSHECKPEGYEFCHNRKVLTIFSASNYYEVGSNRGAYVKLGPALTPHIVQYQANKATHRLTMRQRISRVEESALRALRQKLFAHSSDLLVEFRKRDPDESGVITLSDWATAVESVLHLGLPWRMLRPQLVNSSADNVLEYRSWLDSLAKEQLSRENIQSSLLEKLYRNRSNLETIFRIIDSDHSGFISLDEFRQTWKLFSSHMSIDITDDGICDLARSIDFNKDGHIDINEFLEAFRLVEQSCLEGHASACLQSTDTAESGHSSPGPC.

An IQ domain is found at 21-46 (KAAALIQRWYRRYMARLEMRRRCTWN). A catalytic region spans residues 128 to 544 (ATALVEAFRL…PHIVQYQANK (417 aa)). Positions 179, 181, 208, and 240 each coordinate Mn(2+). The Proton donor role is filled by His241. Position 292 (His292) interacts with Mn(2+). The tract at residues 318 to 349 (CKTRKESENREEQKRKDNQTSSGQKPTPWFLP) is disordered. Residues 321–335 (RKESENREEQKRKDN) show a composition bias toward basic and acidic residues. Residue His492 participates in Mn(2+) binding. EF-hand domains lie at 572–607 (AHSSDLLVEFRKRDPDESGVITLSDWATAVESVLHL), 656–691 (RNRSNLETIFRIIDSDHSGFISLDEFRQTWKLFSSH), and 696–731 (ITDDGICDLARSIDFNKDGHIDINEFLEAFRLVEQS). The Ca(2+) site is built by Asp585, Asp587, Ser589, Asp596, Asp669, Asp671, Ser673, Glu680, Asp709, Asn711, Asp713, His715, and Glu720.

This sequence belongs to the PPP phosphatase family. It depends on Mn(2+) as a cofactor. Detected in retina, more specifically in photoreceptors.

It catalyses the reaction O-phospho-L-seryl-[protein] + H2O = L-seryl-[protein] + phosphate. The enzyme catalyses O-phospho-L-threonyl-[protein] + H2O = L-threonyl-[protein] + phosphate. Activated by calcium. May play a role in phototransduction. May dephosphorylate photoactivated rhodopsin. May function as a calcium sensing regulator of ionic currents, energy production or synaptic transmission. The sequence is that of Serine/threonine-protein phosphatase with EF-hands 2 (Ppef2) from Mus musculus (Mouse).